The sequence spans 364 residues: tRNA 2-selenouridine synthase (364 aa).

The Rhodanese domain occupies 14-137 (LIADTPIIDV…LRQTAIQATI (124 aa)). Catalysis depends on Cys97, which acts as the S-selanylcysteine intermediate.

Belongs to the SelU family. Monomer.

The catalysed reaction is 5-methylaminomethyl-2-thiouridine(34) in tRNA + selenophosphate + (2E)-geranyl diphosphate + H2O + H(+) = 5-methylaminomethyl-2-selenouridine(34) in tRNA + (2E)-thiogeraniol + phosphate + diphosphate. It catalyses the reaction 5-methylaminomethyl-2-thiouridine(34) in tRNA + (2E)-geranyl diphosphate = 5-methylaminomethyl-S-(2E)-geranyl-thiouridine(34) in tRNA + diphosphate. It carries out the reaction 5-methylaminomethyl-S-(2E)-geranyl-thiouridine(34) in tRNA + selenophosphate + H(+) = 5-methylaminomethyl-2-(Se-phospho)selenouridine(34) in tRNA + (2E)-thiogeraniol. The enzyme catalyses 5-methylaminomethyl-2-(Se-phospho)selenouridine(34) in tRNA + H2O = 5-methylaminomethyl-2-selenouridine(34) in tRNA + phosphate. In terms of biological role, involved in the post-transcriptional modification of the uridine at the wobble position (U34) of tRNA(Lys), tRNA(Glu) and tRNA(Gln). Catalyzes the conversion of 2-thiouridine (S2U-RNA) to 2-selenouridine (Se2U-RNA). Acts in a two-step process involving geranylation of 2-thiouridine (S2U) to S-geranyl-2-thiouridine (geS2U) and subsequent selenation of the latter derivative to 2-selenouridine (Se2U) in the tRNA chain. This is tRNA 2-selenouridine synthase from Escherichia coli O157:H7.